The chain runs to 493 residues: (+)-menthofuran synthase (493 aa).

A topological domain (cytoplasmic) is located at residue Met1. A helical; Signal-anchor for type II membrane protein membrane pass occupies residues 2–19 (AALLVFFSVSLILLAVLF). Over 20–493 (HKRKSSLSSR…LLVLATPRQS (474 aa)) the chain is Lumenal. Asn169 carries an N-linked (GlcNAc...) asparagine glycan. Cys434 provides a ligand contact to heme.

It belongs to the cytochrome P450 family. Heme is required as a cofactor.

It localises to the membrane. The enzyme catalyses (R)-pulegone + reduced [NADPH--hemoprotein reductase] + O2 = (R)-menthofuran + oxidized [NADPH--hemoprotein reductase] + 2 H2O + H(+). It functions in the pathway secondary metabolite biosynthesis; terpenoid biosynthesis. Its function is as follows. Monoterpene synthase that catalyzes the formation of (+)-menthofuran from (+)-pulegone. The sequence is that of (+)-menthofuran synthase from Mentha piperita (Peppermint).